Here is a 479-residue protein sequence, read N- to C-terminus: Glutamyl-tRNA(Gln) amidotransferase subunit A (479 aa).

Catalysis depends on charge relay system residues Lys-71 and Ser-146. The active-site Acyl-ester intermediate is the Ser-170.

It belongs to the amidase family. GatA subfamily. Heterotrimer of A, B and C subunits.

The enzyme catalyses L-glutamyl-tRNA(Gln) + L-glutamine + ATP + H2O = L-glutaminyl-tRNA(Gln) + L-glutamate + ADP + phosphate + H(+). Its function is as follows. Allows the formation of correctly charged Gln-tRNA(Gln) through the transamidation of misacylated Glu-tRNA(Gln) in organisms which lack glutaminyl-tRNA synthetase. The reaction takes place in the presence of glutamine and ATP through an activated gamma-phospho-Glu-tRNA(Gln). The protein is Glutamyl-tRNA(Gln) amidotransferase subunit A of Lactobacillus acidophilus (strain ATCC 700396 / NCK56 / N2 / NCFM).